Here is a 398-residue protein sequence, read N- to C-terminus: Cytochrome b (398 aa).

A helical membrane pass occupies residues 45–65 (LGSIAGIALVIQIITGVILAM). The heme b site is built by His-95 and His-109. A run of 9 helical transmembrane segments spans residues 96 to 116 (AVGA…GLYY), 129 to 149 (IGII…VLPW), 164 to 184 (FSAI…GFSV), 192 to 212 (FFSL…LHLV), 245 to 265 (FVGF…EPNY), 277 to 297 (PLVT…YAIL), 304 to 324 (LGGV…PWLD), 339 to 359 (MAFW…GQPA), and 366 to 386 (ISRF…PLIG). Positions 196 and 210 each coordinate heme b.

It belongs to the cytochrome b family. In terms of assembly, the main subunits of complex b-c1 are: cytochrome b, cytochrome c1 and the Rieske protein. It depends on heme b as a cofactor.

Its subcellular location is the cell membrane. In terms of biological role, component of the ubiquinol-cytochrome c reductase complex (complex III or cytochrome b-c1 complex), which is a respiratory chain that generates an electrochemical potential coupled to ATP synthesis. This is Cytochrome b (petB) from Rickettsia conorii (strain ATCC VR-613 / Malish 7).